A 181-amino-acid polypeptide reads, in one-letter code: MYCLFCQHTDTRVIDSRVSEDGATIRRRRECEACGERFSTLETIELKLPVIIKKDGGREAFDGRKLRTSFDRALQKRPVAEERIEMAMRAVIHRLRMAGEREVPSIVVGECVMAELRKLDHVGYVRFASVYRSFQDVADFREEIEKLESELLVSREQLPLLEAAMESMGHPSIDQGGKHGA.

Residues 3–34 (CLFCQHTDTRVIDSRVSEDGATIRRRRECEAC) fold into a zinc finger. Residues 49-139 (PVIIKKDGGR…VYRSFQDVAD (91 aa)) form the ATP-cone domain.

This sequence belongs to the NrdR family. Zn(2+) serves as cofactor.

Its function is as follows. Negatively regulates transcription of bacterial ribonucleotide reductase nrd genes and operons by binding to NrdR-boxes. This chain is Transcriptional repressor NrdR, found in Xylella fastidiosa (strain M12).